The chain runs to 1393 residues: RNA polymerase II-associated protein 1 (1393 aa).

3 disordered regions span residues 34-53, 61-94, and 266-295; these read KKGN…LQDH, NLPD…PEER, and SHTQ…EEPL. The segment covering 64–74 has biased composition (pro residues); sequence DLPPALVPSPP. Position 72 is a phosphoserine (serine 72). Phosphothreonine is present on threonine 321. Residues 496 to 531 are disordered; sequence PSQEDKEDEDEDEECPAGKAKRKSPEEESRPPPDLA. A compositionally biased stretch (acidic residues) spans 500–510; sequence DKEDEDEDEEC. Residues 518 to 531 are compositionally biased toward basic and acidic residues; that stretch reads KSPEEESRPPPDLA. Position 1121 is a phosphoserine (serine 1121).

This sequence belongs to the RPAP1 family. In terms of assembly, part of an RNA polymerase II complex that contains POLR2A, POLR2B, POLR2C, POLR2D, POLR2E, POLR2F, POLR2G, POLR2H, POLR2I, POLR2J, POLR2K, POLR2L, RPAP1, FCP1 plus the general transcription factors TFIIB and TFIIF.

It localises to the nucleus. Its function is as follows. Forms an interface between the RNA polymerase II enzyme and chaperone/scaffolding protein, suggesting that it is required to connect RNA polymerase II to regulators of protein complex formation. Required for interaction of the RNA polymerase II complex with acetylated histone H3. This chain is RNA polymerase II-associated protein 1 (RPAP1), found in Homo sapiens (Human).